A 67-amino-acid chain; its full sequence is Large ribosomal subunit protein uL29 (67 aa).

Belongs to the universal ribosomal protein uL29 family.

The protein is Large ribosomal subunit protein uL29 of Methanosarcina barkeri (strain Fusaro / DSM 804).